The primary structure comprises 80 residues: UPF0180 protein GK1051 (80 aa).

The protein belongs to the UPF0180 family.

The chain is UPF0180 protein GK1051 from Geobacillus kaustophilus (strain HTA426).